We begin with the raw amino-acid sequence, 287 residues long: 4-hydroxybenzoate octaprenyltransferase (287 aa).

7 helical membrane-spanning segments follow: residues 30 to 50 (ALWI…FALG), 92 to 112 (IAIA…LNGL), 133 to 153 (FFAI…PMAF), 158 to 178 (DTVP…SVAY), 207 to 227 (VLAI…LGAA), 232 to 252 (WPYW…YTLI), and 266 to 286 (HNNW…ALAV).

Belongs to the UbiA prenyltransferase family. Mg(2+) is required as a cofactor.

It is found in the cell inner membrane. The enzyme catalyses all-trans-octaprenyl diphosphate + 4-hydroxybenzoate = 4-hydroxy-3-(all-trans-octaprenyl)benzoate + diphosphate. It participates in cofactor biosynthesis; ubiquinone biosynthesis. Functionally, catalyzes the prenylation of para-hydroxybenzoate (PHB) with an all-trans polyprenyl group. Mediates the second step in the final reaction sequence of ubiquinone-8 (UQ-8) biosynthesis, which is the condensation of the polyisoprenoid side chain with PHB, generating the first membrane-bound Q intermediate 3-octaprenyl-4-hydroxybenzoate. In Burkholderia pseudomallei (strain 1106a), this protein is 4-hydroxybenzoate octaprenyltransferase.